The primary structure comprises 354 residues: Vanillate O-demethylase oxygenase subunit (354 aa).

In terms of domain architecture, Rieske spans 7-107 (WYVACTPDEI…VEERYGFIWV (101 aa)). The [2Fe-2S] cluster site is built by cysteine 47, histidine 49, cysteine 66, and histidine 69.

This sequence belongs to the bacterial ring-hydroxylating dioxygenase alpha subunit family. As to quaternary structure, this demethylase system consists of two proteins: an oxygenase and an oxygenase reductase. Requires [2Fe-2S] cluster as cofactor. It depends on Fe cation as a cofactor.

The enzyme catalyses vanillate + NADH + O2 + H(+) = 3,4-dihydroxybenzoate + formaldehyde + NAD(+) + H2O. Its pathway is xenobiotic degradation; vanillyl-alcohol degradation. The polypeptide is Vanillate O-demethylase oxygenase subunit (vanA) (Pseudomonas sp. (strain HR199 / DSM 7063)).